A 314-amino-acid polypeptide reads, in one-letter code: MGLRVVFMGTPEFAVPSLRRIAAMKPQFETVLVVTGCDKPRRSKNSPPEPTPVKQAALELGLPVLEADDVSSHEFALQVAAARPDVIVVAAFRVLPPEVLELPPLGTFNLHGSLLPAYRGAAPVNWAIINGDAETGVTTFFLQKSVDTGNIITMDRTPIGPDENAFELLKRLSEIGAGTVERTLTMIADGAVMPEKQDERFATKAPKLNRENTRIDWNQPVQRLHDFIRGLALKPAAWTTFGGKSLKIYKAKACAIETAPDEPGTLRIADGRLLVAGTDGWIELLSVQAEGKKAMDGELFARGLRARKEMLRFL.

113-116 contributes to the (6S)-5,6,7,8-tetrahydrofolate binding site; the sequence is SLLP.

This sequence belongs to the Fmt family.

The catalysed reaction is L-methionyl-tRNA(fMet) + (6R)-10-formyltetrahydrofolate = N-formyl-L-methionyl-tRNA(fMet) + (6S)-5,6,7,8-tetrahydrofolate + H(+). Its function is as follows. Attaches a formyl group to the free amino group of methionyl-tRNA(fMet). The formyl group appears to play a dual role in the initiator identity of N-formylmethionyl-tRNA by promoting its recognition by IF2 and preventing the misappropriation of this tRNA by the elongation apparatus. This is Methionyl-tRNA formyltransferase from Chlorobaculum tepidum (strain ATCC 49652 / DSM 12025 / NBRC 103806 / TLS) (Chlorobium tepidum).